Reading from the N-terminus, the 235-residue chain is Proteasome subunit alpha type-2-B (235 aa).

K64 participates in a covalent cross-link: Glycyl lysine isopeptide (Lys-Gly) (interchain with G-Cter in ubiquitin).

It belongs to the peptidase T1A family. As to quaternary structure, component of the 20S core complex of the 26S proteasome. The 26S proteasome is composed of a core protease (CP), known as the 20S proteasome, capped at one or both ends by the 19S regulatory particle (RP/PA700). The 20S proteasome core is composed of 28 subunits that are arranged in four stacked rings, resulting in a barrel-shaped structure. The two end rings are each formed by seven alpha subunits, and the two central rings are each formed by seven beta subunits. The catalytic chamber with the active sites is on the inside of the barrel.

It localises to the cytoplasm. The protein localises to the nucleus. Its function is as follows. The proteasome is a multicatalytic proteinase complex which is characterized by its ability to cleave peptides with Arg, Phe, Tyr, Leu, and Glu adjacent to the leaving group at neutral or slightly basic pH. The proteasome has an ATP-dependent proteolytic activity. This chain is Proteasome subunit alpha type-2-B (PAB2), found in Arabidopsis thaliana (Mouse-ear cress).